Reading from the N-terminus, the 288-residue chain is Putative N-terminal acetyltransferase 2 (288 aa).

The interval T68–P90 is disordered.

As to quaternary structure, heterooligomeric.

It is found in the cytoplasm. Functionally, maybe involved in N-terminal acetylation of proteins. N-acetylation plays a role in normal eukaryotic translation and processing, protect against proteolytic degradation and protein turnover. In Saccharomyces cerevisiae (strain ATCC 204508 / S288c) (Baker's yeast), this protein is Putative N-terminal acetyltransferase 2 (NAT2).